Here is a 298-residue protein sequence, read N- to C-terminus: Specificity protein transcription factor 1 (298 aa).

Low complexity predominate over residues 206-218 (VSSGSESVSARGT). Positions 206–233 (VSSGSESVSARGTSGSGGTGKYPSSRTA) are disordered. The C2H2-type zinc-finger motif lies at 260-284 (HNCHIAGCGKVYNKSSHLKAHLRWH).

Belongs to the Sp1 C2H2-type zinc-finger protein family. As to expression, expressed in ASJ sensory neurons, pharyngeal cells, rectal cells, intestine, seam cells, and vulval cells.

Probable transcription factor which modulates gene expression, thereby acting as an ASJ sensory neuron terminal selector gene. The polypeptide is Specificity protein transcription factor 1 (Caenorhabditis elegans).